We begin with the raw amino-acid sequence, 252 residues long: Protein BTG3 (252 aa).

Positions 138 to 163 are disordered; it reads VTSDYHSGSSSSDEDTSKEVDVKPSS.

It belongs to the BTG family. As to expression, ubiquitous.

In terms of biological role, overexpression impairs serum-induced cell cycle progression from the G0/G1 to S phase. The polypeptide is Protein BTG3 (Btg3) (Mus musculus (Mouse)).